The primary structure comprises 522 residues: UPF0288 protein MTH_1865 (522 aa).

The protein belongs to the UPF0288 family.

This is UPF0288 protein MTH_1865 from Methanothermobacter thermautotrophicus (strain ATCC 29096 / DSM 1053 / JCM 10044 / NBRC 100330 / Delta H) (Methanobacterium thermoautotrophicum).